Consider the following 1714-residue polypeptide: Latrophilin Cirl (1714 aa).

Residues 1 to 765 (MSSIDISGRY…LFTMFDGNMR (765 aa)) lie on the Extracellular side of the membrane. The SUEL-type lectin domain maps to 26–115 (ACEGKKLTIE…KYLEAHYQCI (90 aa)). Asn143 is a glycosylation site (N-linked (GlcNAc...) asparagine). Positions 183–302 (PPHTVTHSTP…GSPASGNNSV (120 aa)) are disordered. Residues 186–198 (TVTHSTPSSSTVP) show a composition bias toward low complexity. Residues 244–262 (PSSKLPSAGNATAPSNTRI) show a composition bias toward polar residues. A glycan (N-linked (GlcNAc...) asparagine) is linked at Asn253. Composition is skewed to low complexity over residues 272-282 (DDGTLLTTKSS) and 290-301 (ASNGSPASGNNS). N-linked (GlcNAc...) asparagine glycans are attached at residues Asn299, Asn338, Asn395, Asn652, Asn701, and Asn728. Residues 373–397 (YDEYDDDPSSTTPAPSGGDCLHNSS) are disordered. Residues 558–752 (RSVVQKVKNI…AILMDVVDEH (195 aa)) form the GAIN-B domain. Disulfide bonds link Cys707-Cys734 and Cys722-Cys736. The segment at 707 to 752 (CVFWNYIDHAWSANGCSLESTNRTHSVCSCNHLTNFAILMDVVDEH) is GPS. A helical transmembrane segment spans residues 766–786 (VFIYISIAICVVFIVIALLTL). The Cytoplasmic portion of the chain corresponds to 787-799 (KLFNGVFVKSART). A helical membrane pass occupies residues 800–820 (TIYTSIYVCLLAIELLFLLGI). Residues 821 to 826 (EQTETS) lie on the Extracellular side of the membrane. The chain crosses the membrane as a helical span at residues 827–847 (IFCGFITVFLHCAILSGAAWF). Over 848 to 873 (CYEAFHSYYTLTSDELLVEVDQTPKV) the chain is Cytoplasmic. The helical transmembrane segment at 874 to 894 (NWYYLLSYGLSVSVVAISVAI) threads the bilayer. Topologically, residues 895-911 (NPSTYTQNDYCVLMEAN) are extracellular. A helical membrane pass occupies residues 912–932 (ILFYATFVAPVLIFFVAAIGY). Residues 933–966 (TFLSWIIMCRKSCTGLKTKEHTRLASVRFDIRCS) lie on the Cytoplasmic side of the membrane. The chain crosses the membrane as a helical span at residues 967–987 (FVFLLLLSAVWCSAYFYLRGA). Residues 988-994 (KTDEDTT) lie on the Extracellular side of the membrane. Residues 995-1015 (TIYGYCFICFNTLLGLYIFVF) form a helical membrane-spanning segment. Over 1016 to 1714 (HCIQNEKIRR…VRCYLEPLAK (699 aa)) the chain is Cytoplasmic. 3 positions are modified to phosphoserine: Ser1155, Ser1245, and Ser1252. Disordered stretches follow at residues 1229–1253 (PNSQHGKKKRGGAVPASPSGSLHSR), 1268–1287 (KTKQGQPSGYPHYAEALDPP), 1293–1354 (AFYQ…PPPH), 1447–1536 (GGGS…DERM), and 1551–1694 (FQRQ…QQRH). Over residues 1296–1315 (QQQQQMRRQQQQQQQQQQQQ) the composition is skewed to low complexity. Residues Ser1317 and Ser1318 each carry the phosphoserine modification. 2 stretches are compositionally biased toward low complexity: residues 1330–1348 (LHLQHQQQHQRRVGGQQQL) and 1453–1478 (GGSVSSRSQQQQLQKQQKQQQQQQQR). Composition is skewed to acidic residues over residues 1486–1500 (DDDDDDDEEEDDEAT) and 1510–1523 (CDDDDEEEDSDLDD). Residues 1524 to 1536 (DAHKLPPQSDERM) are compositionally biased toward basic and acidic residues. The span at 1565–1580 (GALPPGVAPGAGSAGP) shows a compositional bias: low complexity. A compositionally biased stretch (polar residues) spans 1644–1659 (QTPAQKRQQLQKLSPQ). A compositionally biased stretch (low complexity) spans 1660-1675 (STTSSSSHTSHSNLQP). The segment covering 1679-1693 (PLTHQHPHPPQHQQR) has biased composition (basic residues).

It belongs to the G-protein coupled receptor 2 family. LN-TM7 subfamily. In terms of assembly, forms a heterodimer, consisting of a large extracellular region non-covalently linked to a seven-transmembrane moiety. Post-translationally, proteolytically cleaved into 2 subunits, an extracellular subunit and a seven-transmembrane subunit.

It is found in the cell membrane. The protein is Latrophilin Cirl of Drosophila ananassae (Fruit fly).